The sequence spans 895 residues: Probable methyltransferase PMT27 (895 aa).

Topologically, residues 1-16 (MAFGRGRGNKRTSTSS) are cytoplasmic. The helical; Signal-anchor for type II membrane protein transmembrane segment at 17–37 (YASTITMVIFVALCVFGVWML) threads the bilayer. The Lumenal portion of the chain corresponds to 38-895 (SSNSVIPPQI…KGFWRPETSQ (858 aa)). A compositionally biased stretch (polar residues) spans 43 to 52 (IPPQITQGST). The disordered stretch occupies residues 43–362 (IPPQITQGST…QRQTSESNTV (320 aa)). A compositionally biased stretch (basic and acidic residues) spans 90 to 114 (NPGKLPDDAVKSEDEQRKSAKEKSE). Low complexity predominate over residues 115 to 127 (TTSSKTQTQETQQ). The span at 129 to 143 (NDDKISEEKEKDNGK) shows a compositional bias: basic and acidic residues. Residue Asn-145 is glycosylated (N-linked (GlcNAc...) asparagine). A compositionally biased stretch (basic and acidic residues) spans 154–174 (GQMKKVVKEFEKEQKQQRDED). A compositionally biased stretch (low complexity) spans 176–191 (GTQPKGTQGQEQGQGK). Polar residues-rich tracts occupy residues 199-232 (GNKQGQEQDSNTDVTFTDATKQEQPMETGQGETS) and 243-256 (PEEQNSGNEETGQQ). Positions 257-320 (NEEKTTASEE…RKDEKKHEQG (64 aa)) are enriched in basic and acidic residues. Residues 337 to 346 (SQKSWKSQAT) show a composition bias toward polar residues. N-linked (GlcNAc...) asparagine glycosylation is found at Asn-375 and Asn-709.

Belongs to the methyltransferase superfamily.

The protein localises to the endoplasmic reticulum membrane. In Arabidopsis thaliana (Mouse-ear cress), this protein is Probable methyltransferase PMT27.